Consider the following 335-residue polypeptide: Cell division protein ZipA (335 aa).

The Periplasmic portion of the chain corresponds to 1-4; it reads MDLN. Residues 5 to 25 traverse the membrane as a helical segment; the sequence is AILIILGVIALIILVAHGIWS. Residues 26–335 lie on the Cytoplasmic side of the membrane; it reads NRREKSQYFE…AERDYLARVS (310 aa).

This sequence belongs to the ZipA family. As to quaternary structure, interacts with FtsZ via their C-terminal domains.

The protein resides in the cell inner membrane. Its function is as follows. Essential cell division protein that stabilizes the FtsZ protofilaments by cross-linking them and that serves as a cytoplasmic membrane anchor for the Z ring. Also required for the recruitment to the septal ring of downstream cell division proteins. This is Cell division protein ZipA from Histophilus somni (strain 2336) (Haemophilus somnus).